The chain runs to 698 residues: Polyribonucleotide nucleotidyltransferase (698 aa).

2 residues coordinate Mg(2+): D490 and D496. The 60-residue stretch at 557 to 616 (PKVVTMTIKPDKIRDVIGPGGKKINEIIDETGVKLDIEQDGTIFIGAVDQAMINRAREII) folds into the KH domain. Residues 626–694 (GQTYQATVKR…KQGRVNASHR (69 aa)) enclose the S1 motif domain.

This sequence belongs to the polyribonucleotide nucleotidyltransferase family. The cofactor is Mg(2+).

The protein resides in the cytoplasm. The enzyme catalyses RNA(n+1) + phosphate = RNA(n) + a ribonucleoside 5'-diphosphate. Functionally, involved in mRNA degradation. Catalyzes the phosphorolysis of single-stranded polyribonucleotides processively in the 3'- to 5'-direction. This Staphylococcus aureus (strain bovine RF122 / ET3-1) protein is Polyribonucleotide nucleotidyltransferase.